The primary structure comprises 777 residues: Translation initiation factor IF-2 (777 aa).

2 disordered regions span residues 30–54 (SPSM…QDEN) and 98–117 (EDSN…SFKE). Residues 98–109 (EDSNEKTNDRDS) show a composition bias toward basic and acidic residues. A tr-type G domain is found at 279–449 (PKPPIVTFMG…LLIAELMKLE (171 aa)). A G1 region spans residues 288–295 (GHVDHGKT). 288 to 295 (GHVDHGKT) lines the GTP pocket. The segment at 313 to 317 (GITQH) is G2. The segment at 334–337 (DTPG) is G3. GTP contacts are provided by residues 334–338 (DTPGH) and 388–391 (NKID). The tract at residues 388–391 (NKID) is G4. Residues 425–427 (SAK) form a G5 region.

This sequence belongs to the TRAFAC class translation factor GTPase superfamily. Classic translation factor GTPase family. IF-2 subfamily.

The protein resides in the cytoplasm. One of the essential components for the initiation of protein synthesis. Protects formylmethionyl-tRNA from spontaneous hydrolysis and promotes its binding to the 30S ribosomal subunits. Also involved in the hydrolysis of GTP during the formation of the 70S ribosomal complex. This is Translation initiation factor IF-2 from Wolbachia sp. subsp. Brugia malayi (strain TRS).